The following is a 260-amino-acid chain: Pyridoxine 5'-phosphate synthase (260 aa).

2 residues coordinate 3-amino-2-oxopropyl phosphate: N7 and R18. Residue H43 is the Proton acceptor of the active site. Residues R45 and H50 each coordinate 1-deoxy-D-xylulose 5-phosphate. Residue E83 is the Proton acceptor of the active site. Position 113 (T113) interacts with 1-deoxy-D-xylulose 5-phosphate. H208 functions as the Proton donor in the catalytic mechanism. 3-amino-2-oxopropyl phosphate contacts are provided by residues D209 and 230–231; that span reads GH.

The protein belongs to the PNP synthase family. Homooctamer; tetramer of dimers.

Its subcellular location is the cytoplasm. It catalyses the reaction 3-amino-2-oxopropyl phosphate + 1-deoxy-D-xylulose 5-phosphate = pyridoxine 5'-phosphate + phosphate + 2 H2O + H(+). It participates in cofactor biosynthesis; pyridoxine 5'-phosphate biosynthesis; pyridoxine 5'-phosphate from D-erythrose 4-phosphate: step 5/5. In terms of biological role, catalyzes the complicated ring closure reaction between the two acyclic compounds 1-deoxy-D-xylulose-5-phosphate (DXP) and 3-amino-2-oxopropyl phosphate (1-amino-acetone-3-phosphate or AAP) to form pyridoxine 5'-phosphate (PNP) and inorganic phosphate. The sequence is that of Pyridoxine 5'-phosphate synthase from Leptospira biflexa serovar Patoc (strain Patoc 1 / Ames).